Here is a 261-residue protein sequence, read N- to C-terminus: Probable cyclic nucleotide phosphodiesterase PSM_A2567 (261 aa).

Fe cation is bound by residues aspartate 22, histidine 24, aspartate 62, asparagine 94, histidine 160, histidine 198, and histidine 200. AMP-binding positions include histidine 24, aspartate 62, and 94–95; that span reads NH. Histidine 200 is a binding site for AMP.

Belongs to the cyclic nucleotide phosphodiesterase class-III family. The cofactor is Fe(2+).

This chain is Probable cyclic nucleotide phosphodiesterase PSM_A2567, found in Pseudoalteromonas sp. (strain SM9913).